Reading from the N-terminus, the 143-residue chain is Peptide methionine sulfoxide reductase MsrB (143 aa).

Residues aspartate 16 to arginine 139 enclose the MsrB domain. Zn(2+) is bound by residues cysteine 55, cysteine 58, cysteine 104, and cysteine 107. Cysteine 128 acts as the Nucleophile in catalysis.

It belongs to the MsrB Met sulfoxide reductase family. Zn(2+) serves as cofactor.

It carries out the reaction L-methionyl-[protein] + [thioredoxin]-disulfide + H2O = L-methionyl-(R)-S-oxide-[protein] + [thioredoxin]-dithiol. This chain is Peptide methionine sulfoxide reductase MsrB, found in Burkholderia lata (strain ATCC 17760 / DSM 23089 / LMG 22485 / NCIMB 9086 / R18194 / 383).